The chain runs to 273 residues: Octanoyltransferase LipM (273 aa).

Residues 33-244 (GKTPPTLRFY…AFTRLYAVEF (212 aa)) enclose the BPL/LPL catalytic domain. The Acyl-thioester intermediate role is filled by C146.

The protein belongs to the octanoyltransferase LipM family. As to quaternary structure, monomer.

It catalyses the reaction octanoyl-[ACP] + L-lysyl-[protein] = N(6)-octanoyl-L-lysyl-[protein] + holo-[ACP] + H(+). Its pathway is protein modification; protein lipoylation via endogenous pathway; protein N(6)-(lipoyl)lysine from octanoyl-[acyl-carrier-protein]. Its function is as follows. Catalyzes the transfer of endogenously produced octanoic acid from octanoyl-acyl-carrier-protein onto the lipoyl domain of GcvH, an intermediate carrier during protein lipoylation. The sequence is that of Octanoyltransferase LipM from Moorella thermoacetica (strain ATCC 39073 / JCM 9320).